Here is a 146-residue protein sequence, read N- to C-terminus: Large ribosomal subunit protein uL15 (146 aa).

Over residues 1 to 18 (MKLHELKPAEGSRKERNR) the composition is skewed to basic and acidic residues. The disordered stretch occupies residues 1–54 (MKLHELKPAEGSRKERNRVGRGVATGNGKTSGRGHKGQKARSGGGVRPGFEGGQ). The segment covering 42 to 52 (SGGGVRPGFEG) has biased composition (gly residues).

The protein belongs to the universal ribosomal protein uL15 family. As to quaternary structure, part of the 50S ribosomal subunit.

In terms of biological role, binds to the 23S rRNA. The polypeptide is Large ribosomal subunit protein uL15 (Staphylococcus aureus (strain Mu3 / ATCC 700698)).